A 181-amino-acid polypeptide reads, in one-letter code: Der GTPase-activating protein YihI (181 aa).

The segment at Met1–Ile73 is disordered. Positions Asn22–Glu32 are enriched in basic and acidic residues. Residues Ile33–Leu42 show a composition bias toward basic residues. Basic and acidic residues predominate over residues Gln55 to Ile67.

Belongs to the YihI family. As to quaternary structure, interacts with Der.

Its function is as follows. A GTPase-activating protein (GAP) that modifies Der/EngA GTPase function. May play a role in ribosome biogenesis. The sequence is that of Der GTPase-activating protein YihI from Aliivibrio fischeri (strain ATCC 700601 / ES114) (Vibrio fischeri).